Reading from the N-terminus, the 169-residue chain is Lutropin/choriogonadotropin subunit beta (169 aa).

The N-terminal stretch at 1–20 is a signal peptide; sequence MEMLQGLLLWMLLSVGGVWA. 6 disulfide bridges follow: cysteine 29–cysteine 77, cysteine 43–cysteine 92, cysteine 46–cysteine 130, cysteine 54–cysteine 108, cysteine 58–cysteine 110, and cysteine 113–cysteine 120. Asparagine 33 carries N-linked (GlcNAc...) asparagine glycosylation. Residues 131–169 are disordered; the sequence is APQASSSSKDPPSQPLTSTSTPTPGASNRSSHPLPIKTS. Low complexity predominate over residues 145 to 154; sequence PLTSTSTPTP. Over residues 155-169 the composition is skewed to polar residues; sequence GASNRSSHPLPIKTS. Asparagine 158 carries an N-linked (GlcNAc...) asparagine glycan.

Belongs to the glycoprotein hormones subunit beta family. As to quaternary structure, heterodimer of a common alpha chain and a unique beta chain which confers biological specificity to thyrotropin, lutropin, follitropin and gonadotropin.

The protein resides in the secreted. Functionally, promotes spermatogenesis and ovulation by stimulating the testes and ovaries to synthesize steroids. In Equus quagga burchellii (Burchell's zebra), this protein is Lutropin/choriogonadotropin subunit beta (LHB).